The sequence spans 503 residues: Cytochrome P450 3A15 (503 aa).

A heme-binding site is contributed by C442.

The protein belongs to the cytochrome P450 family. The cofactor is heme.

It localises to the endoplasmic reticulum membrane. The protein localises to the microsome membrane. The enzyme catalyses an organic molecule + reduced [NADPH--hemoprotein reductase] + O2 = an alcohol + oxidized [NADPH--hemoprotein reductase] + H2O + H(+). Its function is as follows. Cytochromes P450 are a group of heme-thiolate monooxygenases. In liver microsomes, this enzyme is involved in an NADPH-dependent electron transport pathway. It oxidizes a variety of structurally unrelated compounds, including steroids, fatty acids, and xenobiotics. The chain is Cytochrome P450 3A15 (CYP3A15) from Cavia porcellus (Guinea pig).